The primary structure comprises 541 residues: Sorting nexin-27 (541 aa).

Positions 1–42 (MADEDGEGIHPSAPHRNGGGGGGGGSGLHCAGNGGGGGGGPR) are disordered. Over residues 17-41 (NGGGGGGGGSGLHCAGNGGGGGGGP) the composition is skewed to gly residues. The PDZ domain occupies 43-136 (VVRIVKSESG…ELILTVLSVP (94 aa)). Residues serine 51 and serine 62 each carry the phosphoserine modification. In terms of domain architecture, PX spans 161–269 (QAVPISVPRY…EFLSESDENY (109 aa)). Residues 273 to 362 (SDVELRVALP…TCLTIRKWLF (90 aa)) form the Ras-associating domain. Residues 273–362 (SDVELRVALP…TCLTIRKWLF (90 aa)) are FERM-like region F1. Residues 373-421 (NDLAVTYFFHQAVDDVKKGYIKAEEKSYQLQKLYEQRKMVMYLNMLRTC) form an FERM-like region F2 region. Residues 425-525 (NEIIFPHCAC…RVFCELKWRK (101 aa)) form an FERM-like region F3 region.

This sequence belongs to the sorting nexin family. In terms of assembly, core component of the SNX27-retromer, a multiprotein complex composed of SNX27, the WASH complex and the retromer complex. Interacts (via PDZ domain) with a number of target transmembrane proteins (via PDZ-binding motif): ABCC4, ADRB2, ARHGEF7, GRIA1, GRIA2, GRIN1, GRIN2A GRIN2C, KCNJ6, KCNJ9 and SLC2A1/GLUT1. Interacts (via the FERM-like regions) with the WASH complex. Interacts with SNX1. Interacts with CYTIP. Isoform 1 and isoform 2 directly interact with DGKZ. Isoform 1 and isoform 2 interact with HT4R isoform 5-HTA(A). Interacts with MCC. Interacts (via PDZ domains) with SLC9A3; directs SLC9A3 membrane insertion from early endosomes to the plasma membrane. Widely expressed. Expressed in cells of hematopoietic origin (at protein level).

Its subcellular location is the early endosome membrane. It is found in the cytoplasm. It localises to the cytosol. Involved in the retrograde transport from endosome to plasma membrane, a trafficking pathway that promotes the recycling of internalized transmembrane proteins. Following internalization, endocytosed transmembrane proteins are delivered to early endosomes and recycled to the plasma membrane instead of being degraded in lysosomes. SNX27 specifically binds and directs sorting of a subset of transmembrane proteins containing a PDZ-binding motif at the C-terminus: following interaction with target transmembrane proteins, associates with the retromer complex, preventing entry into the lysosomal pathway, and promotes retromer-tubule based plasma membrane recycling. SNX27 also binds with the WASH complex. Interacts with membranes containing phosphatidylinositol-3-phosphate (PtdIns(3P)). May participate in establishment of natural killer cell polarity. Recruits CYTIP to early endosomes. The protein is Sorting nexin-27 (SNX27) of Homo sapiens (Human).